The primary structure comprises 85 residues: uncharacterized protein (85 aa).

This is an uncharacterized protein from Sinorhizobium fredii (strain NBRC 101917 / NGR234).